The following is a 178-amino-acid chain: NADH-quinone oxidoreductase subunit B 1 (178 aa).

Residues Cys-39, Cys-40, Cys-104, and Cys-135 each contribute to the [4Fe-4S] cluster site.

This sequence belongs to the complex I 20 kDa subunit family. As to quaternary structure, NDH-1 is composed of 14 different subunits. Subunits NuoB, C, D, E, F, and G constitute the peripheral sector of the complex. The cofactor is [4Fe-4S] cluster.

The protein localises to the cell inner membrane. The enzyme catalyses a quinone + NADH + 5 H(+)(in) = a quinol + NAD(+) + 4 H(+)(out). NDH-1 shuttles electrons from NADH, via FMN and iron-sulfur (Fe-S) centers, to quinones in the respiratory chain. The immediate electron acceptor for the enzyme in this species is believed to be a menaquinone. Couples the redox reaction to proton translocation (for every two electrons transferred, four hydrogen ions are translocated across the cytoplasmic membrane), and thus conserves the redox energy in a proton gradient. This Cytophaga hutchinsonii (strain ATCC 33406 / DSM 1761 / CIP 103989 / NBRC 15051 / NCIMB 9469 / D465) protein is NADH-quinone oxidoreductase subunit B 1.